The following is a 206-amino-acid chain: Peptidyl-tRNA hydrolase (206 aa).

Residue Y19 participates in tRNA binding. H24 functions as the Proton acceptor in the catalytic mechanism. The tRNA site is built by Y70, N72, and N118.

It belongs to the PTH family. Monomer.

The protein resides in the cytoplasm. It carries out the reaction an N-acyl-L-alpha-aminoacyl-tRNA + H2O = an N-acyl-L-amino acid + a tRNA + H(+). Hydrolyzes ribosome-free peptidyl-tRNAs (with 1 or more amino acids incorporated), which drop off the ribosome during protein synthesis, or as a result of ribosome stalling. Functionally, catalyzes the release of premature peptidyl moieties from peptidyl-tRNA molecules trapped in stalled 50S ribosomal subunits, and thus maintains levels of free tRNAs and 50S ribosomes. The sequence is that of Peptidyl-tRNA hydrolase from Prochlorococcus marinus (strain MIT 9303).